The sequence spans 461 residues: Ufm1-specific protease 2 (461 aa).

Active-site residues include cysteine 294, aspartate 418, and histidine 420.

Belongs to the peptidase C78 family. As to expression, expressed at high level in brain, kidney, stomach, skeletal muscle, liver, pancreas, spleen and testis.

It localises to the endoplasmic reticulum. The protein localises to the cytoplasm. Its subcellular location is the nucleus. Thiol-dependent isopeptidase that specifically cleaves UFM1, a ubiquitin-like modifier protein, from conjugated proteins, such as CD274/PD-L1, CYB5R3, DDRGK1, MRE11, RPL26/uL24, TRIP4 and RPL26/uL24. While it is also able to mediate the processing of UFM1 precursors, a prerequisite for conjugation reactions, UFSP2 mainly acts as a protein deUFMylase that mediates deconjugation of UFM1 from target proteins. Mediates deUFMylation of RPL26/uL24, a critical step to release the UFM1 ribosome E3 ligase (UREL) complex during the recycling of 60S ribosome subunits from the endoplasmic reticulum. Catalyzes deUFMylation of TRIP4, regulating intracellular nuclear receptors transactivation and thereby regulate cell proliferation and differentiation. The protein is Ufm1-specific protease 2 of Mus musculus (Mouse).